A 355-amino-acid chain; its full sequence is D-alanine--D-alanine ligase (355 aa).

The region spanning 143-350 (KTIFSNLKIP…IEQLVAKLVD (208 aa)) is the ATP-grasp domain. An ATP-binding site is contributed by 178-233 (LKKLNFPFFVKPSNSGSSLGISKVINESEILQSLEKAQKIDSRILVEEGLEVREIE). Aspartate 303, glutamate 317, and asparagine 319 together coordinate Mg(2+).

The protein belongs to the D-alanine--D-alanine ligase family. Mg(2+) serves as cofactor. Mn(2+) is required as a cofactor.

It is found in the cytoplasm. The catalysed reaction is 2 D-alanine + ATP = D-alanyl-D-alanine + ADP + phosphate + H(+). It functions in the pathway cell wall biogenesis; peptidoglycan biosynthesis. In terms of biological role, cell wall formation. This is D-alanine--D-alanine ligase from Prochlorococcus marinus (strain MIT 9215).